A 592-amino-acid polypeptide reads, in one-letter code: Alpha-1,3-galactosidase B (592 aa).

The N-terminal stretch at 1–14 (MKLLSVLSLSLVLS) is a signal peptide. The N-palmitoyl cysteine moiety is linked to residue cysteine 15. Cysteine 15 carries S-diacylglycerol cysteine lipidation. PbH1 repeat units follow at residues 429–451 (TPEV…LFST), 452–474 (PRKT…LLCG), and 485–538 (CRHV…VIED).

The protein belongs to the glycosyl hydrolase 110 family. B subfamily.

Its subcellular location is the cell membrane. It carries out the reaction Hydrolysis of terminal, non-reducing branched (1-&gt;3)-alpha-D-galactosidic residues, producing free D-galactose.. It catalyses the reaction Hydrolysis of terminal, non-reducing linear (1-&gt;3)-alpha-D-galactosidic residues, producing free D-galactose.. The enzyme catalyses Hydrolysis of terminal, non-reducing alpha-D-galactose residues in alpha-D-galactosides, including galactose oligosaccharides, galactomannans and galactolipids.. Its function is as follows. Alpha-galactosidase. Removes both branched alpha-1,3-linked galactose residues of blood group B antigens and linear alpha-1,3-linked galactose structures. The sequence is that of Alpha-1,3-galactosidase B (glaB1) from Phocaeicola vulgatus (strain ATCC 8482 / DSM 1447 / JCM 5826 / CCUG 4940 / NBRC 14291 / NCTC 11154) (Bacteroides vulgatus).